Consider the following 437-residue polypeptide: Magnetosome protein MamN (437 aa).

A run of 11 helical transmembrane segments spans residues 26–46 (LAVLAGAAALVVIGTISGSYT), 53–73 (SVYFETLALIFGMAAISALLA), 95–115 (WILVMMALVTYGISLASNSLV), 136–156 (VPVIIAEIIAANLGGASTMIG), 174–194 (FIAGMMPVCLILLAVMLVFFE), 226–246 (LLSYGLIIFGVTVAGLILAGP), 252–268 (GWIAFVAGVTALGLGRF), 281–301 (DILFYGGLFVMVGALTSVGIL), 320–340 (AILLMWMAAAVTIFVGGGTSA), 358–378 (AAWWALALGIMAGSVAALPGA), and 416–436 (WGMPLMGIFLVLGTVYIAVLV).

This sequence belongs to the arsenite-antimonite (ArsB) efflux (TC 2.A.45) family.

The protein localises to the magnetosome membrane. In terms of biological role, plays a role in biomineralization; might regulate pH in the magnetosome. The sequence is that of Magnetosome protein MamN (mamN) from Paramagnetospirillum magneticum (strain ATCC 700264 / AMB-1) (Magnetospirillum magneticum).